Consider the following 308-residue polypeptide: Cysteine synthase (308 aa).

At Lys-45 the chain carries N6-(pyridoxal phosphate)lysine. Pyridoxal 5'-phosphate is bound by residues Asn-75, 179-183 (GTGGT), and Ser-267.

It belongs to the cysteine synthase/cystathionine beta-synthase family. Homodimer. Forms CymR(2):CysK(2) or CymR(4):CysK(4) complexes in the absence of O-acetylserine. The cofactor is pyridoxal 5'-phosphate.

The enzyme catalyses O-acetyl-L-serine + hydrogen sulfide = L-cysteine + acetate. It participates in amino-acid biosynthesis; L-cysteine biosynthesis; L-cysteine from L-serine: step 2/2. Its function is as follows. Catalyzes the conversion of O-acetylserine to cysteine. Also acts as a sensor of cysteine availability in the signal transduction pathway modulating CymR activity. When cysteine is present, the pool of O-acetylserine (OAS) is low, which leads to the formation of a CymR-CysK complex and transcriptional repression of the CymR regulon occurs. In the absence of cysteine, the OAS pool is high and the CymR-CysK complex is mostly dissociated, leading to a faster dissociation of CymR from its DNA targets and the lifting of CymR-dependent repression. The protein is Cysteine synthase (cysK) of Bacillus subtilis (strain 168).